The chain runs to 101 residues: Phosphoribosyl-AMP cyclohydrolase (101 aa).

A Mg(2+)-binding site is contributed by D71. Residue C72 coordinates Zn(2+). Mg(2+) is bound by residues D73 and D75. Residues C88 and C95 each coordinate Zn(2+).

Belongs to the PRA-CH family. Homodimer. Requires Mg(2+) as cofactor. Zn(2+) is required as a cofactor.

The protein localises to the cytoplasm. It carries out the reaction 1-(5-phospho-beta-D-ribosyl)-5'-AMP + H2O = 1-(5-phospho-beta-D-ribosyl)-5-[(5-phospho-beta-D-ribosylamino)methylideneamino]imidazole-4-carboxamide. It participates in amino-acid biosynthesis; L-histidine biosynthesis; L-histidine from 5-phospho-alpha-D-ribose 1-diphosphate: step 3/9. In terms of biological role, catalyzes the hydrolysis of the adenine ring of phosphoribosyl-AMP. This Bacillus cereus (strain ATCC 14579 / DSM 31 / CCUG 7414 / JCM 2152 / NBRC 15305 / NCIMB 9373 / NCTC 2599 / NRRL B-3711) protein is Phosphoribosyl-AMP cyclohydrolase.